Here is a 525-residue protein sequence, read N- to C-terminus: Phospho-2-dehydro-3-deoxyheptonate aldolase 1, chloroplastic (525 aa).

Residues 1–13 are compositionally biased toward polar residues; that stretch reads MALSNASSLSTRS. Residues 1–35 form a disordered region; sequence MALSNASSLSTRSIYGGDLSHRPSNRQSSFTFHPA. The N-terminal 52 residues, 1-52, are a transit peptide targeting the chloroplast; sequence MALSNASSLSTRSIYGGDLSHRPSNRQSSFTFHPAVNTKPKSVNLVTAVHAA.

The protein belongs to the class-II DAHP synthase family.

Its subcellular location is the plastid. It localises to the chloroplast. It catalyses the reaction D-erythrose 4-phosphate + phosphoenolpyruvate + H2O = 7-phospho-2-dehydro-3-deoxy-D-arabino-heptonate + phosphate. The protein operates within metabolic intermediate biosynthesis; chorismate biosynthesis; chorismate from D-erythrose 4-phosphate and phosphoenolpyruvate: step 1/7. The chain is Phospho-2-dehydro-3-deoxyheptonate aldolase 1, chloroplastic (DHS1) from Arabidopsis thaliana (Mouse-ear cress).